Consider the following 831-residue polypeptide: Phenylalanine--tRNA ligase beta subunit (831 aa).

A tRNA-binding domain is found at 44 to 155 (GPVDGPVTVG…GAAEPGADGA (112 aa)). The 76-residue stretch at 414–489 (WSPPPIRMGV…RLEGLEVIPS (76 aa)) folds into the B5 domain. Aspartate 467, aspartate 473, glutamate 476, and glutamate 477 together coordinate Mg(2+). The 94-residue stretch at 737–830 (SPYPAVFQDV…AAERVGAVLR (94 aa)) folds into the FDX-ACB domain.

The protein belongs to the phenylalanyl-tRNA synthetase beta subunit family. Type 1 subfamily. Tetramer of two alpha and two beta subunits. It depends on Mg(2+) as a cofactor.

The protein localises to the cytoplasm. It carries out the reaction tRNA(Phe) + L-phenylalanine + ATP = L-phenylalanyl-tRNA(Phe) + AMP + diphosphate + H(+). The chain is Phenylalanine--tRNA ligase beta subunit (pheT) from Mycobacterium tuberculosis (strain ATCC 25618 / H37Rv).